We begin with the raw amino-acid sequence, 345 residues long: Myb/SANT-like DNA-binding domain-containing protein 4 (345 aa).

In terms of domain architecture, Myb-like spans 4 to 77 (LKRKRKSNFS…EVKRRYLDWR (74 aa)). K9 is covalently cross-linked (Glycyl lysine isopeptide (Lys-Gly) (interchain with G-Cter in SUMO2)). S106 is modified (phosphoserine). Residues K114 and K142 each participate in a glycyl lysine isopeptide (Lys-Gly) (interchain with G-Cter in SUMO2) cross-link. The segment at 141-160 (VKVEEEERDPQSPEFEIEEE) is disordered. T188 bears the Phosphothreonine mark. A coiled-coil region spans residues 203–345 (LLVNIEKQKL…LRIQKEGHLQ (143 aa)). Glycyl lysine isopeptide (Lys-Gly) (interchain with G-Cter in SUMO2) cross-links involve residues K237, K254, and K273.

This chain is Myb/SANT-like DNA-binding domain-containing protein 4 (MSANTD4), found in Bos taurus (Bovine).